A 51-amino-acid chain; its full sequence is Large ribosomal subunit protein eL39 (51 aa).

Belongs to the eukaryotic ribosomal protein eL39 family.

Its function is as follows. Binds specifically to a region in 26S rRNA near the subunit interface. In Sulfolobus acidocaldarius (strain ATCC 33909 / DSM 639 / JCM 8929 / NBRC 15157 / NCIMB 11770), this protein is Large ribosomal subunit protein eL39 (rpl39e).